The sequence spans 133 residues: Profilin (133 aa).

This sequence belongs to the profilin family.

In terms of biological role, more likely to influence phosphoinositide metabolism than actin assembly. In Camelus, this protein is Profilin.